Here is a 666-residue protein sequence, read N- to C-terminus: DNA mismatch repair protein MutL (666 aa).

Belongs to the DNA mismatch repair MutL/HexB family.

This protein is involved in the repair of mismatches in DNA. It is required for dam-dependent methyl-directed DNA mismatch repair. May act as a 'molecular matchmaker', a protein that promotes the formation of a stable complex between two or more DNA-binding proteins in an ATP-dependent manner without itself being part of a final effector complex. The chain is DNA mismatch repair protein MutL from Clostridium botulinum (strain Kyoto / Type A2).